A 687-amino-acid chain; its full sequence is MSAQFITPKKRPHSPLDSNELLPSFEDPQDMINAVVSTLSAPEEKTNVSIAYANEKNQATEIQAYAKIAGKDWTFYVKSLAVSIGRNIELSAPSNTNITTPLIDIDLGPAKVVSRSHAAITYNLDLRCWELKVLGRNGARIDGQKVNVDSPNVNALHSGAILDIGGTQMMFILPDAPAVVAPKMLEKCLLRYKEQQQQQNKRISSGPGIGGSTSFQMFDKAHLTHSPSSISANSLQSNLDQDLSKEEAKDIKPPYSYATMITQAILSNPQGVMSLSEIYNWIADHYAYYKYSKTGWQNSIRHNLSLNKAFEKVPRRPNEPGKGMKWQISESYKEEFLNKISDGTISKTRRGSSVSRQLSLHLATHNQLPESHKYTMDQQIHNGTAASIPQQQKQQQQQQKRPPQQQNSQPHLSQPHYTIPSNPMQTNSMGYIPQSNIYNMSNSDRRYTPYQQSQNPLMYQHQQQHIGQTYNQLGRPQGQLGQPMMQPQQQSYTSSNIKTEPSSPKRNPSISNNTPKMAKGTVSTESHSRSTSYTTTQLHEMSNFNSSANDSTSTAPTASTTTNGDIGLNFASPKKITALEAYTPERGSKGNPSGTNNNNNTNNTNTNTTNNNNGKNTAGGPNTNQSSPAFWNFVQFSTPNGQSPVRKSSEEVGNNSPTLNRKIKRERENDETNSPFKKKQRTEMIDS.

The segment at 1-23 (MSAQFITPKKRPHSPLDSNELLP) is disordered. The FHA domain maps to 82 to 146 (VSIGRNIELS…NGARIDGQKV (65 aa)). The segment covering 226 to 241 (SPSSISANSLQSNLDQ) has biased composition (polar residues). The segment at 226-246 (SPSSISANSLQSNLDQDLSKE) is disordered. Positions 252–350 (KPPYSYATMI…SDGTISKTRR (99 aa)) form a DNA-binding region, fork-head. 3 disordered regions span residues 385-449 (AASI…RYTP), 472-569 (QLGR…IGLN), and 584-687 (PERG…MIDS). Residues 389–410 (PQQQKQQQQQQKRPPQQQNSQP) show a composition bias toward low complexity. Over residues 411 to 442 (HLSQPHYTIPSNPMQTNSMGYIPQSNIYNMSN) the composition is skewed to polar residues. Over residues 472 to 490 (QLGRPQGQLGQPMMQPQQQ) the composition is skewed to low complexity. Positions 491 to 540 (SYTSSNIKTEPSSPKRNPSISNNTPKMAKGTVSTESHSRSTSYTTTQLHE) are enriched in polar residues. Composition is skewed to low complexity over residues 542–563 (SNFN…TTTN) and 589–624 (KGNP…PNTN). A compositionally biased stretch (polar residues) spans 625 to 659 (QSSPAFWNFVQFSTPNGQSPVRKSSEEVGNNSPTL). The short motif at 663–670 (IKREREND) is the Nuclear localization signal element.

Its subcellular location is the nucleus. Its function is as follows. Transcription factor required for the morphogenesis of true hyphal as well as yeast cells. Contributes to virulence. The polypeptide is Fork-head transcriptional regulator 2 (FKH2) (Candida albicans (strain SC5314 / ATCC MYA-2876) (Yeast)).